The following is a 712-amino-acid chain: Polyribonucleotide nucleotidyltransferase (712 aa).

Residues aspartate 487 and aspartate 493 each contribute to the Mg(2+) site. In terms of domain architecture, KH spans 554–613 (PKIITMTINPDKIRDVIGPSGKQINKIIEETGVKIDIEQDGTVFISSINQEMNDKAKKII). The 69-residue stretch at 623 to 691 (GEIYEGKVKR…KQGRVNLSRK (69 aa)) folds into the S1 motif domain.

It belongs to the polyribonucleotide nucleotidyltransferase family. Mg(2+) serves as cofactor.

It is found in the cytoplasm. It carries out the reaction RNA(n+1) + phosphate = RNA(n) + a ribonucleoside 5'-diphosphate. Involved in mRNA degradation. Catalyzes the phosphorolysis of single-stranded polyribonucleotides processively in the 3'- to 5'-direction. The polypeptide is Polyribonucleotide nucleotidyltransferase (Bacillus cereus (strain 03BB102)).